Consider the following 261-residue polypeptide: 5'-nucleotidase SurE (261 aa).

The a divalent metal cation site is built by aspartate 8, aspartate 9, serine 39, and asparagine 91.

This sequence belongs to the SurE nucleotidase family. A divalent metal cation serves as cofactor.

The protein localises to the cytoplasm. The enzyme catalyses a ribonucleoside 5'-phosphate + H2O = a ribonucleoside + phosphate. Its function is as follows. Nucleotidase that shows phosphatase activity on nucleoside 5'-monophosphates. The protein is 5'-nucleotidase SurE of Polaromonas naphthalenivorans (strain CJ2).